The sequence spans 339 residues: DNA-directed RNA polymerase subunit alpha (339 aa).

The interval 1-233 (MVREEIAVAT…DLFIPFLHAE (233 aa)) is alpha N-terminal domain (alpha-NTD). The tract at residues 267 to 339 (KKMALKSIFI…FGFDLPKNGK (73 aa)) is alpha C-terminal domain (alpha-CTD).

The protein belongs to the RNA polymerase alpha chain family. As to quaternary structure, in plastids the minimal PEP RNA polymerase catalytic core is composed of four subunits: alpha, beta, beta', and beta''. When a (nuclear-encoded) sigma factor is associated with the core the holoenzyme is formed, which can initiate transcription.

It is found in the plastid. The protein resides in the chloroplast. The catalysed reaction is RNA(n) + a ribonucleoside 5'-triphosphate = RNA(n+1) + diphosphate. Functionally, DNA-dependent RNA polymerase catalyzes the transcription of DNA into RNA using the four ribonucleoside triphosphates as substrates. The chain is DNA-directed RNA polymerase subunit alpha from Piper cenocladum (Ant piper).